We begin with the raw amino-acid sequence, 558 residues long: ATP synthase subunit alpha (558 aa).

172-179 (GDRKTGKT) contributes to the ATP binding site. Residues 536-558 (ESVKVHQAIPAKTSEKSKNSTPR) form a disordered region. Residues 548-558 (TSEKSKNSTPR) are compositionally biased toward basic and acidic residues.

It belongs to the ATPase alpha/beta chains family. F-type ATPases have 2 components, CF(1) - the catalytic core - and CF(0) - the membrane proton channel. CF(1) has five subunits: alpha(3), beta(3), gamma(1), delta(1), epsilon(1). CF(0) has three main subunits: a(1), b(2) and c(9-12). The alpha and beta chains form an alternating ring which encloses part of the gamma chain. CF(1) is attached to CF(0) by a central stalk formed by the gamma and epsilon chains, while a peripheral stalk is formed by the delta and b chains.

The protein resides in the cell membrane. The enzyme catalyses ATP + H2O + 4 H(+)(in) = ADP + phosphate + 5 H(+)(out). Produces ATP from ADP in the presence of a proton gradient across the membrane. The alpha chain is a regulatory subunit. The polypeptide is ATP synthase subunit alpha (Mycobacterium leprae (strain Br4923)).